Reading from the N-terminus, the 478-residue chain is UDP-N-acetylmuramate--L-alanine ligase (478 aa).

An ATP-binding site is contributed by 130–136; that stretch reads GTHGKTT.

The protein belongs to the MurCDEF family.

Its subcellular location is the cytoplasm. The catalysed reaction is UDP-N-acetyl-alpha-D-muramate + L-alanine + ATP = UDP-N-acetyl-alpha-D-muramoyl-L-alanine + ADP + phosphate + H(+). Its pathway is cell wall biogenesis; peptidoglycan biosynthesis. In terms of biological role, cell wall formation. This is UDP-N-acetylmuramate--L-alanine ligase from Microcystis aeruginosa (strain NIES-843 / IAM M-2473).